The sequence spans 158 residues: MDEPSEKVDPVVNPETQMYDGSQREDEGDSPDDSEILQPETLVKVMKKLTLNPSAKPTKYHRRQRVRLQVKSQPVENRSERIMREVQSAFPRRRVRTLLSVLKDPIARMRRFVRIEQRQRQLEGNERRDEPFRCLCTFCHYQRWDPSENAKIGQNQKN.

Disordered stretches follow at residues M1–Q38 and S54–R78. The segment covering D26–E35 has biased composition (acidic residues). Basic residues predominate over residues T58–L68.

Its subcellular location is the nucleus. The protein localises to the cytoplasm. Its function is as follows. Primordial germ cell (PGCs)-specific protein involved in epigenetic chromatin reprogramming in the zygote following fertilization. In zygotes, DNA demethylation occurs selectively in the paternal pronucleus before the first cell division, while the adjacent maternal pronucleus and certain paternally-imprinted loci are protected from this process. Participates in protection of DNA methylation in the maternal pronucleus by preventing conversion of 5mC to 5hmC: specifically recognizes and binds histone H3 dimethylated at 'Lys-9' (H3K9me2) on maternal genome, and protects maternal genome from TET3-mediated conversion to 5hmC and subsequent DNA demethylation. Does not bind paternal chromatin, which is mainly packed into protamine and does not contain much H3K9me2 mark. Also protects imprinted loci that are marked with H3K9me2 in mature sperm from DNA demethylation in early embryogenesis. May be important for the totipotent/pluripotent states continuing through preimplantation development. Also involved in chromatin condensation in oocytogenesis. In Rattus norvegicus (Rat), this protein is Developmental pluripotency-associated protein 3 (Dppa3).